The following is a 189-amino-acid chain: Large ribosomal subunit protein uL5 (189 aa).

The protein belongs to the universal ribosomal protein uL5 family. As to quaternary structure, part of the 50S ribosomal subunit; part of the 5S rRNA/L5/L18/L25 subcomplex. Contacts the 5S rRNA and the P site tRNA. Forms a bridge to the 30S subunit in the 70S ribosome.

This is one of the proteins that bind and probably mediate the attachment of the 5S RNA into the large ribosomal subunit, where it forms part of the central protuberance. In the 70S ribosome it contacts protein S13 of the 30S subunit (bridge B1b), connecting the 2 subunits; this bridge is implicated in subunit movement. Contacts the P site tRNA; the 5S rRNA and some of its associated proteins might help stabilize positioning of ribosome-bound tRNAs. This chain is Large ribosomal subunit protein uL5, found in Salinispora tropica (strain ATCC BAA-916 / DSM 44818 / JCM 13857 / NBRC 105044 / CNB-440).